The following is a 300-amino-acid chain: uncharacterized protein (300 aa).

Residues 230–251 are disordered; it reads LRQSTSRQSISRQSISRQSTSR. Over residues 231-251 the composition is skewed to low complexity; sequence RQSTSRQSISRQSISRQSTSR.

This is an uncharacterized protein from Acanthamoeba polyphaga (Amoeba).